The sequence spans 371 residues: Alginate lyase (371 aa).

A signal peptide spans 1–26; sequence MQSTDLKRLLIPSLLGLAIVTGSAQA. Residues 67-68, 140-141, and Tyr258 each bind substrate; these read SK and HT.

It belongs to the polysaccharide lyase 5 family.

It localises to the periplasm. It carries out the reaction Eliminative cleavage of alginate to give oligosaccharides with 4-deoxy-alpha-L-erythro-hex-4-enuronosyl groups at their non-reducing ends and beta-D-mannuronate at their reducing end.. Catalyzes the depolymerization of alginate by cleaving the beta-1,4 glycosidic bond between two adjacent sugar residues via a beta-elimination mechanism. May serve to degrade mislocalized alginate that is trapped in the periplasmic space. The sequence is that of Alginate lyase from Pseudomonas fluorescens (strain ATCC BAA-477 / NRRL B-23932 / Pf-5).